The chain runs to 340 residues: MYQIVIETEDGETCRRMRPSEDWISRAEAERNLLASCRAGCATCKADCTDGDYELIDVKVQAVPPDEEEDGKVLLCRTFPRSDLHLLVPYTYDRISFEAIQTNWLAEILACDRVSSNVVRLVLQRSRPMAARISLNFVPGQFVDIEIPGTHTRRSYSMASVAEDGQLEFIIRLLPDGAFSKFLQTEAKVGMRVDLRGPAGSFFLHDHGGRSRVFVAGGTGLSPVLSMIRQLGKASDPSPATLLFGVTNREELFYVDELKTLAQSMPTLGVRIAVVNDDGGNGVDKGTVIDLLRAELEIDLLLGHARRRRRRETARSCREDHRDRCPAWRSDFLEKFLASG.

The region spanning M1–Y92 is the 2Fe-2S ferredoxin-type domain. Residues C37, C41, C44, and C76 each contribute to the [2Fe-2S] cluster site. The FAD-binding FR-type domain occupies Q101–H205. V215–R229 serves as a coordination point for FAD.

The soluble methane monooxygenase (sMMO) consists of four components A/MMOH (composed of alpha/MmoX, beta/MmoY and gamma/MmoZ), B/MMOB (MmoB), C/MMOR (MmoC) and D/MMOD (MmoD). Requires [2Fe-2S] cluster as cofactor.

It carries out the reaction methane + NADH + O2 + H(+) = methanol + NAD(+) + H2O. The enzyme catalyses methane + NADPH + O2 + H(+) = methanol + NADP(+) + H2O. In terms of biological role, responsible for the initial oxygenation of methane to methanol in methanotrophs. It also catalyzes the monohydroxylation of a variety of unactivated alkenes, alicyclic, aromatic and heterocyclic compounds. The component C is the iron-sulfur flavoprotein of sMMO. The polypeptide is Methane monooxygenase component C (mmoC) (Methylosinus trichosporium).